A 183-amino-acid chain; its full sequence is MSRKARDPIVLPQGVEVSIQNDEISVKGPKGSLTQVLAKEVEIAVKGNEVFVSPAAHIIDRPGRMQGLYWALIANMVKGVHLGFEKRLEMIGVGFRASVQGSFLDLSIGVSHPTKMPIPTGLEVSVEKNTLISIKGINKQLVGEFAACVRAKRPPEPYKGKGIRYENEYVRRKAGKAAKTGKK.

Belongs to the universal ribosomal protein uL6 family. In terms of assembly, part of the 50S ribosomal subunit.

In terms of biological role, this protein binds to the 23S rRNA, and is important in its secondary structure. It is located near the subunit interface in the base of the L7/L12 stalk, and near the tRNA binding site of the peptidyltransferase center. The sequence is that of Large ribosomal subunit protein uL6 from Chlamydia muridarum (strain MoPn / Nigg).